The following is a 482-amino-acid chain: Falcipain-2b (482 aa).

The Cytoplasmic segment spans residues 1-35; the sequence is MDYHMDYIPNEVISHQGERFVDKYVDRKILKNKKS. Residues 1–241 constitute a propeptide, activation peptide; the sequence is MDYHMDYIPN…PLKNSKYLLD (241 aa). The Bipartite vacuolar targeting signal 1 motif lies at 16–25; sequence QGERFVDKYV. Residues 36–56 traverse the membrane as a helical; Signal-anchor for type II membrane protein segment; sequence LLVIISLSVLSVVGFILFYFT. Over 57 to 482 the chain is Lumenal; it reads PNFRKSDLFK…GTDAFIPLIE (426 aa). N67 is a glycosylation site (N-linked (GlcNAc...) asparagine). Positions 84–105 match the Bipartite vacuolar targeting signal 2 motif; the sequence is KSPNGKKFIVSKIDEALSFYDN. Residue N117 is glycosylated (N-linked (GlcNAc...) asparagine). Positions 242-258 match the Nose motif; required for the correct folding of the mature form motif; that stretch reads QINYDAVIKKYKGNENF. 4 disulfides stabilise this stretch: C280–C321, C314–C355, C340–C360, and C409–C470. C283 is an active-site residue. H415 is an active-site residue. The Arm motif; binds to host hemoglobin and required for the inhibitory interaction between the propeptide and the catalytic domain motif lies at 426 to 435; sequence EIVNPLTKKG.

The protein belongs to the peptidase C1 family. Component of the hemozoin formation complex (HFC) composed of falcipains FP2A and/or FP2B, plasmepsins PMII, PMIII/HAP and PMIV, heme detoxifying protein HDP and falcilysin FLN. The HFC complex is involved in hemoglobin degradation and detoxification of heme in the food vacuole during the asexual blood stage.

The protein resides in the vacuole. It is found in the membrane. Cysteine protease which cleaves native host hemoglobin in the food vacuole during the asexual blood stage. Preferentially cleaves substrates which have a leucine at the P2 position. This Plasmodium falciparum (isolate 3D7) protein is Falcipain-2b.